Consider the following 583-residue polypeptide: MSVIRPSPIPIPRCRSQVLHRRLYSIQLIQRRRRRWNPRSEVEDTAIESTARSPEAAGGKMVVELVGAFNEVTERMNSVWLSTSSSRLLFKALKLSIPILQSLPLASDGRSPLSKALSLSIILADLQMDAEVISASILSEVVDANAISIYEVRDHIGTGTAHLLHEIFRVKNIPFKVDVLDDETAASLRKFYLTYYDIRAVIMDLVSKLDEMRHLDHLPRYRQQILSLEVLKIYSPLAHAVGANHLSLELEDISFRYLFPCSYIYLDSWLRGHENGSKPLIDVYKEQLHRSLKDDLVLAEMVNDVYIKGRYKSRYSMMKKLLRDGRKPEEVNDVLGLRVILMPNSVVNDVEVGEKACYRTSEIIRSLWKEIPHRTKDYIARPKENGYRSLHMAVDVSDSDQIRPLMEIQIRTMDMDGSANAGTASHSLYKGGLTDPKEAKRLKAIMLAAADLAAIRLKDISSNKHQSFKTTTNQRDRVFCLLDKNGDGMISIEELMEVMEELGAPGEDAEEMMQLLDSNSDGSLSSDEFDTFQKQVEFMRKWEDRDNEYKSLLDEKLHDLPHQDTTGLIQLYNKELEDRLSTH.

Residues 1–58 (MSVIRPSPIPIPRCRSQVLHRRLYSIQLIQRRRRRWNPRSEVEDTAIESTARSPEAAG) constitute a chloroplast transit peptide. Residues 112 to 212 (PLSKALSLSI…MDLVSKLDEM (101 aa)) form the HD domain. 2 EF-hand domains span residues 470-505 (TTTN…LGAP) and 507-539 (EDAE…VEFM). Ca(2+) contacts are provided by Asp483, Asn485, Asp487, Met489, Glu494, Asp517, Asn519, Asp521, Ser523, and Glu528.

This sequence belongs to the RelA/SpoT family. Expressed in shoots, cotyledons, rosette and cauline leaves, stems, sepals, pistils and siliques.

The protein resides in the plastid. It is found in the chloroplast. It carries out the reaction GTP + ATP = guanosine 3'-diphosphate 5'-triphosphate + AMP. With respect to regulation, activated by calcium. Possesses calcium-dependent ppGpp (guanosine 3'-diphosphate 5'-diphosphate) synthetase activity in vitro and is able to functionally complement E.coli relA mutants. Plays an important role in the timing adjustment of pistil and pollen maturation required for successful pollination. May be involved in a rapid plant ppGpp-mediated response to pathogens and other stresses. This Arabidopsis thaliana (Mouse-ear cress) protein is Probable GTP diphosphokinase CRSH, chloroplastic (CRSH).